The following is a 943-amino-acid chain: Protein translocase subunit SecA (943 aa).

ATP is bound by residues Gln-90, 108-112, and Asp-509; that span reads GEGKT. The segment at 534–576 is disordered; the sequence is KPDNEHKPPIPQQRSSKAGGGFASKSESISNKNSKSSGASLFP. Positions 556–570 are enriched in low complexity; that stretch reads ASKSESISNKNSKSS.

Belongs to the SecA family. In terms of assembly, monomer and homodimer. Part of the essential Sec protein translocation apparatus which comprises SecA, SecYEG and auxiliary proteins SecDF. Other proteins may also be involved.

The protein localises to the cell inner membrane. It localises to the cellular thylakoid membrane. It is found in the cytoplasm. It catalyses the reaction ATP + H2O + cellular proteinSide 1 = ADP + phosphate + cellular proteinSide 2.. In terms of biological role, part of the Sec protein translocase complex. Interacts with the SecYEG preprotein conducting channel. Has a central role in coupling the hydrolysis of ATP to the transfer of proteins into and across the cell membrane, serving as an ATP-driven molecular motor driving the stepwise translocation of polypeptide chains across the membrane. Functionally, probably participates in protein translocation into and across both the cytoplasmic and thylakoid membranes in cyanobacterial cells. The protein is Protein translocase subunit SecA of Prochlorococcus marinus (strain MIT 9515).